Consider the following 325-residue polypeptide: Tetraacyldisaccharide 4'-kinase (325 aa).

ATP is bound at residue 55 to 62; the sequence is TAGGNGKT.

The protein belongs to the LpxK family.

The enzyme catalyses a lipid A disaccharide + ATP = a lipid IVA + ADP + H(+). The protein operates within glycolipid biosynthesis; lipid IV(A) biosynthesis; lipid IV(A) from (3R)-3-hydroxytetradecanoyl-[acyl-carrier-protein] and UDP-N-acetyl-alpha-D-glucosamine: step 6/6. Functionally, transfers the gamma-phosphate of ATP to the 4'-position of a tetraacyldisaccharide 1-phosphate intermediate (termed DS-1-P) to form tetraacyldisaccharide 1,4'-bis-phosphate (lipid IVA). This chain is Tetraacyldisaccharide 4'-kinase, found in Salmonella newport (strain SL254).